Reading from the N-terminus, the 444-residue chain is C4-dicarboxylate transport protein 2 (444 aa).

A run of 6 helical transmembrane segments spans residues 23-43, 61-81, 95-115, 162-182, 198-218, and 236-256; these read ILYV…WLWP, LIKM…IAHI, LVYF…VANV, GEIL…MGLG, AMFG…FGAM, and LIAT…GIIA.

This sequence belongs to the dicarboxylate/amino acid:cation symporter (DAACS) (TC 2.A.23) family.

It localises to the cell inner membrane. Functionally, responsible for the transport of dicarboxylates such as succinate, fumarate, and malate from the periplasm across the membrane. The sequence is that of C4-dicarboxylate transport protein 2 from Bradyrhizobium diazoefficiens (strain JCM 10833 / BCRC 13528 / IAM 13628 / NBRC 14792 / USDA 110).